A 326-amino-acid polypeptide reads, in one-letter code: Pyruvate dehydrogenase E1 component subunit alpha (326 aa).

Heterodimer of an alpha and a beta chain. It depends on thiamine diphosphate as a cofactor.

It catalyses the reaction N(6)-[(R)-lipoyl]-L-lysyl-[protein] + pyruvate + H(+) = N(6)-[(R)-S(8)-acetyldihydrolipoyl]-L-lysyl-[protein] + CO2. The pyruvate dehydrogenase complex catalyzes the overall conversion of pyruvate to acetyl-CoA and CO(2). It contains multiple copies of three enzymatic components: pyruvate dehydrogenase (E1), dihydrolipoamide acetyltransferase (E2) and lipoamide dehydrogenase (E3). The chain is Pyruvate dehydrogenase E1 component subunit alpha (pdhA) from Rickettsia prowazekii (strain Madrid E).